We begin with the raw amino-acid sequence, 521 residues long: Glucose-1-phosphate adenylyltransferase large subunit 3, chloroplastic (521 aa).

Residues 1 to 61 (MDSCCNFSLG…RKLRPGVAYA (61 aa)) constitute a chloroplast transit peptide.

The protein belongs to the bacterial/plant glucose-1-phosphate adenylyltransferase family. As to quaternary structure, heterotetramer. In terms of tissue distribution, probably are expressed in roots, flowers and/or seeds.

Its subcellular location is the plastid. The protein localises to the chloroplast. It carries out the reaction alpha-D-glucose 1-phosphate + ATP + H(+) = ADP-alpha-D-glucose + diphosphate. The protein operates within glycan biosynthesis; starch biosynthesis. Its activity is regulated as follows. Activated by 3'phosphoglycerate, inhibited by orthophosphate. Allosteric regulation. This protein plays a role in synthesis of starch. It catalyzes the synthesis of the activated glycosyl donor, ADP-glucose from Glc-1-P and ATP. The polypeptide is Glucose-1-phosphate adenylyltransferase large subunit 3, chloroplastic (APL3) (Arabidopsis thaliana (Mouse-ear cress)).